The chain runs to 182 residues: ADP-ribosylation factor 1 (182 aa).

The N-myristoyl glycine moiety is linked to residue Gly-2. GTP-binding positions include 24–31 (GLDNAGKT), 67–71 (DLGGQ), and 126–129 (NKQD).

The protein belongs to the small GTPase superfamily. Arf family.

The protein localises to the golgi apparatus. The enzyme catalyses GTP + H2O = GDP + phosphate + H(+). GTP-binding protein involved in protein trafficking; may modulate vesicle budding and uncoating within the Golgi apparatus. The polypeptide is ADP-ribosylation factor 1 (ARF1) (Brassica rapa subsp. pekinensis (Chinese cabbage)).